The primary structure comprises 127 residues: Protein ApaG (127 aa).

In terms of domain architecture, ApaG spans 3-127; it reads DTNKYRIEVQ…FVLASPRALH (125 aa).

This chain is Protein ApaG, found in Dechloromonas aromatica (strain RCB).